The chain runs to 101 residues: uncharacterized protein (101 aa).

It localises to the cytoplasm. This is an uncharacterized protein from Saccharomyces cerevisiae (strain ATCC 204508 / S288c) (Baker's yeast).